A 405-amino-acid chain; its full sequence is Tryptophan synthase beta chain (405 aa).

N6-(pyridoxal phosphate)lysine is present on Lys98.

The protein belongs to the TrpB family. Tetramer of two alpha and two beta chains. The cofactor is pyridoxal 5'-phosphate.

It catalyses the reaction (1S,2R)-1-C-(indol-3-yl)glycerol 3-phosphate + L-serine = D-glyceraldehyde 3-phosphate + L-tryptophan + H2O. It functions in the pathway amino-acid biosynthesis; L-tryptophan biosynthesis; L-tryptophan from chorismate: step 5/5. Functionally, the beta subunit is responsible for the synthesis of L-tryptophan from indole and L-serine. This chain is Tryptophan synthase beta chain, found in Xanthomonas oryzae pv. oryzae (strain MAFF 311018).